A 73-amino-acid chain; its full sequence is UPF0235 protein LA_1736 (73 aa).

The protein belongs to the UPF0235 family.

The sequence is that of UPF0235 protein LA_1736 from Leptospira interrogans serogroup Icterohaemorrhagiae serovar Lai (strain 56601).